The following is a 786-amino-acid chain: Succinoglycan biosynthesis transport protein ExoP (786 aa).

Topologically, residues methionine 1–arginine 42 are cytoplasmic. The helical transmembrane segment at leucine 43–tyrosine 66 threads the bilayer. The Periplasmic segment spans residues threonine 67–aspartate 689. Alanine 583–serine 590 provides a ligand contact to ATP. A helical transmembrane segment spans residues tyrosine 690–alanine 711. At aspartate 712–alanine 786 the chain is on the cytoplasmic side.

The protein to B.solanacearum EpsB.

The protein localises to the cell membrane. It participates in glycan metabolism; exopolysaccharide biosynthesis. In Rhizobium meliloti (strain 1021) (Ensifer meliloti), this protein is Succinoglycan biosynthesis transport protein ExoP (exoP).